A 319-amino-acid polypeptide reads, in one-letter code: DNA-directed RNA polymerases II, IV and V subunit 3 (319 aa).

M1 bears the N-acetylmethionine mark.

Belongs to the archaeal Rpo3/eukaryotic RPB3 RNA polymerase subunit family. Component of the RNA polymerase II complex consisting of at least 12 subunits. Interacts with SHH1, CLSY1, NRPB11 and NRPD1. Interacts with IYO.

It localises to the nucleus. In terms of biological role, DNA-dependent RNA polymerase catalyzes the transcription of DNA into RNA using the four ribonucleoside triphosphates as substrates. Component of RNA polymerase II which synthesizes mRNA precursors and many functional non-coding RNAs. Pol II is the central component of the basal RNA polymerase II transcription machinery. It is composed of mobile elements that move relative to each other. NRPB3 is part of the core element with the central large cleft and the clamp element that moves to open and close the cleft. Component of RNA polymerases IV and V which mediate short-interfering RNAs (siRNA) accumulation and subsequent RNA-directed DNA methylation-dependent (RdDM) transcriptional gene silencing (TGS) of endogenous repeated sequences, including transposable elements. The sequence is that of DNA-directed RNA polymerases II, IV and V subunit 3 (NRPB3) from Arabidopsis thaliana (Mouse-ear cress).